A 158-amino-acid polypeptide reads, in one-letter code: Snaclec convulxin subunit alpha (158 aa).

The first 23 residues, 1–23, serve as a signal peptide directing secretion; sequence MGRFIFVSFGLLVLFLSLSGTGA. Disulfide bonds link Cys-27–Cys-38, Cys-55–Cys-152, and Cys-127–Cys-144. Positions 34-158 constitute a C-type lectin domain; sequence YDQHCYRIFN…PFVCKFPPQC (125 aa).

It belongs to the snaclec family. In terms of assembly, tetramer of heterodimers of alpha and beta subunits (alphabeta)(4); disulfide-linked. As to expression, expressed by the venom gland.

It localises to the secreted. Functionally, snake venom lectin that activates platelets by binding to the platelet collagen receptor glycoprotein VI (GP6). The indirect activation of integrin alpha-IIb/beta-3 (ITGA2B/ITGB3) also induced by the toxin is upstream the cytoskeletal translocation of GPIb, FcRgamma (FCER1G) and 14-3-3zeta (YWHAZ). The sequence is that of Snaclec convulxin subunit alpha from Crotalus durissus terrificus (South American rattlesnake).